The sequence spans 163 residues: Protein-export protein SecB (163 aa).

It belongs to the SecB family. As to quaternary structure, homotetramer, a dimer of dimers. One homotetramer interacts with 1 SecA dimer.

The protein resides in the cytoplasm. Functionally, one of the proteins required for the normal export of preproteins out of the cell cytoplasm. It is a molecular chaperone that binds to a subset of precursor proteins, maintaining them in a translocation-competent state. It also specifically binds to its receptor SecA. The chain is Protein-export protein SecB from Burkholderia ambifaria (strain MC40-6).